A 196-amino-acid chain; its full sequence is Pro-FMRFamide-related neuropeptide VF (196 aa).

The first 26 residues, 1-26, serve as a signal peptide directing secretion; that stretch reads MEIISSKLFILLTLATSSLLTSNIFC. Residues 27–55 constitute a propeptide that is removed on maturation; sequence ADELVMSNLHSKENYDKYSEPRGYPKGER. Phe92 carries the post-translational modification Phenylalanine amide. Propeptides lie at residues 95–99 and 115–121; these read NVQEE and NMEVSLV. A Phenylalanine amide modification is found at Phe131. Positions 134–196 are excised as a propeptide; it reads TTTAKSVCRM…IDDAELKQEK (63 aa).

It belongs to the FARP (FMRFamide related peptide) family. As to expression, specifically expressed in the retina. Detected in the hypothalamus.

It is found in the secreted. Its function is as follows. Efficiently inhibits forskolin-induced production of cAMP. Acts as a potent negative regulator of gonadotropin synthesis and secretion. Induces secretion of prolactin. Efficiently inhibits forskolin-induced production of cAMP. Blocks morphine-induced analgesia. Functionally, shows no inhibitory activity of forskolin-induced production of cAMP. The polypeptide is Pro-FMRFamide-related neuropeptide VF (Homo sapiens (Human)).